The following is a 274-amino-acid chain: tRNA-cytidine(32) 2-sulfurtransferase (274 aa).

Residues 40-45 carry the PP-loop motif motif; sequence SGGKDS. Positions 115, 118, and 206 each coordinate [4Fe-4S] cluster.

Belongs to the TtcA family. In terms of assembly, homodimer. Mg(2+) serves as cofactor. [4Fe-4S] cluster is required as a cofactor.

The protein localises to the cytoplasm. The enzyme catalyses cytidine(32) in tRNA + S-sulfanyl-L-cysteinyl-[cysteine desulfurase] + AH2 + ATP = 2-thiocytidine(32) in tRNA + L-cysteinyl-[cysteine desulfurase] + A + AMP + diphosphate + H(+). It participates in tRNA modification. Functionally, catalyzes the ATP-dependent 2-thiolation of cytidine in position 32 of tRNA, to form 2-thiocytidine (s(2)C32). The sulfur atoms are provided by the cysteine/cysteine desulfurase (IscS) system. The sequence is that of tRNA-cytidine(32) 2-sulfurtransferase from Stutzerimonas stutzeri (strain A1501) (Pseudomonas stutzeri).